Consider the following 82-residue polypeptide: U6 snRNA-associated Sm-like protein LSm6 (82 aa).

The Sm domain occupies 13–82 (DPSGFLSEII…GNNVMYISAD (70 aa)).

Belongs to the snRNP Sm proteins family. SmF/LSm6 subfamily. In terms of assembly, component of the heptameric LSM1-LSM7 complex, which consists of snr-1/lsm1, snr-2/lsm2, snr-3/lsm3, snr-4/lsm4, snr-5/lsm5, snr-6/lsm6 and snr-7/lsm7. Component of the heptameric LSM2-LSM8 complex, which consists of snr-2/lsm2, snr-3/lsm3, snr-4/lsm4, snr-5/lsm5, snr-6/lsm6, snr-7/lsm7 and snr-8/lsm8. The LSm subunits form a seven-membered ring structure with a doughnut shape.

It is found in the cytoplasm. Its subcellular location is the nucleus. Its function is as follows. Component of LSm protein complexes, which are involved in RNA processing and may function in a chaperone-like manner, facilitating the efficient association of RNA processing factors with their substrates. Component of the cytoplasmic LSM1-LSM7 complex, which is thought to be involved in mRNA degradation by activating the decapping step in the 5'-to-3' mRNA decay pathway. Component of the nuclear LSM2-LSM8 complex, which is involved in splicing of nuclear mRNAs. LSM2-LSM8 associates with multiple snRNP complexes containing the U6 snRNA (U4/U6 di-snRNP, spliceosomal U4/U6.U5 tri-snRNP, and free U6 snRNP). It binds directly to the 3'-terminal U-tract of U6 snRNA and plays a role in the biogenesis and stability of the U6 snRNP and U4/U6 snRNP complexes. LSM2-LSM8 probably also is involved degradation of nuclear pre-mRNA by targeting them for decapping, and in processing of pre-tRNAs, pre-rRNAs and U3 snoRNA. The chain is U6 snRNA-associated Sm-like protein LSm6 (snr-6) from Neurospora crassa (strain ATCC 24698 / 74-OR23-1A / CBS 708.71 / DSM 1257 / FGSC 987).